Here is a 314-residue protein sequence, read N- to C-terminus: Peroxisome biogenesis factor 10 (314 aa).

Over 1-7 (MNTYVAE) the chain is Peroxisomal matrix. A helical transmembrane segment spans residues 8–37 (IGEIVRSQRRDEEYIEDITERLSRVSKELL). Gly38 is a topological domain (cytoplasmic). Residues 39–60 (QRTWIRWFPYLKSIASTLYYTS) traverse the membrane as a helical segment. Residues 61-90 (TVVLGNQTLGEEYVHLFESNGLERTVPSIP) are Peroxisomal matrix-facing. A helical transmembrane segment spans residues 91 to 110 (SRISFVLLHSAFPLISNYLI). Topologically, residues 111 to 142 (QKAESTLTHPSTESFLGIPIRKNQKARQSFLD) are cytoplasmic. A helical membrane pass occupies residues 143 to 166 (VFFWLRTKLFPQLQRAHIALFYIT). Residues 167 to 197 (GAYYSIARRFTGIRFLSASAHSDIPALKVYR) are Peroxisomal matrix-facing. The helical transmembrane segment at 198–218 (FLGYITLIQLAVSIGISLYSF) threads the bilayer. Residues 219 to 314 (LEQEKFNNKL…PRDVTPLLNL (96 aa)) are Cytoplasmic-facing. Zn(2+) is bound by residues Cys255, Cys258, Cys269, His271, Cys274, Cys277, Cys296, and Cys299. Residues 255-300 (CSICLENKNPSALFCGHLFCWTCIQEHAVAATSSASTSSARCPQCR) form an RING-type zinc finger.

Belongs to the pex2/pex10/pex12 family. As to quaternary structure, component of the PEX2-PEX10-PEX12 retrotranslocation channel.

The protein resides in the peroxisome membrane. It carries out the reaction S-ubiquitinyl-[E2 ubiquitin-conjugating enzyme]-L-cysteine + [acceptor protein]-L-lysine = [E2 ubiquitin-conjugating enzyme]-L-cysteine + N(6)-ubiquitinyl-[acceptor protein]-L-lysine.. It functions in the pathway protein modification; protein ubiquitination. Its activity is regulated as follows. The E3 ubiquitin-protein ligase activity is stimulated by PEX12/prx-12. Its function is as follows. E3 ubiquitin-protein ligase component of a retrotranslocation channel required for peroxisome organization by mediating export of the PEX5/prx-5 receptor from peroxisomes to the cytosol, thereby promoting PEX5/prx-5 recycling. The retrotranslocation channel is composed of PEX2/prx-2, PEX10/prx-10 and PEX12/prx-12; each subunit contributing transmembrane segments that coassemble into an open channel that specifically allows the passage of PEX5/prx-5 through the peroxisomal membrane. PEX10/prx-10 also regulates PEX5 recycling by acting as a E3 ubiquitin-protein ligase. When PEX5/prx-5 recycling is compromised, PEX10/prx-10 catalyzes polyubiquitination of PEX5/prx-5 during its passage through the retrotranslocation channel, leading to its degradation. This chain is Peroxisome biogenesis factor 10, found in Caenorhabditis elegans.